The primary structure comprises 232 residues: Phosphatidylserine decarboxylase proenzyme (232 aa).

Serine 190 serves as the catalytic Schiff-base intermediate with substrate; via pyruvic acid. Serine 190 carries the pyruvic acid (Ser); by autocatalysis modification.

This sequence belongs to the phosphatidylserine decarboxylase family. PSD-A subfamily. Heterodimer of a large membrane-associated beta subunit and a small pyruvoyl-containing alpha subunit. Pyruvate is required as a cofactor. Post-translationally, is synthesized initially as an inactive proenzyme. Formation of the active enzyme involves a self-maturation process in which the active site pyruvoyl group is generated from an internal serine residue via an autocatalytic post-translational modification. Two non-identical subunits are generated from the proenzyme in this reaction, and the pyruvate is formed at the N-terminus of the alpha chain, which is derived from the carboxyl end of the proenzyme. The post-translation cleavage follows an unusual pathway, termed non-hydrolytic serinolysis, in which the side chain hydroxyl group of the serine supplies its oxygen atom to form the C-terminus of the beta chain, while the remainder of the serine residue undergoes an oxidative deamination to produce ammonia and the pyruvoyl prosthetic group on the alpha chain.

Its subcellular location is the cell membrane. The enzyme catalyses a 1,2-diacyl-sn-glycero-3-phospho-L-serine + H(+) = a 1,2-diacyl-sn-glycero-3-phosphoethanolamine + CO2. It participates in phospholipid metabolism; phosphatidylethanolamine biosynthesis; phosphatidylethanolamine from CDP-diacylglycerol: step 2/2. Its function is as follows. Catalyzes the formation of phosphatidylethanolamine (PtdEtn) from phosphatidylserine (PtdSer). This Cereibacter sphaeroides (strain ATCC 17025 / ATH 2.4.3) (Rhodobacter sphaeroides) protein is Phosphatidylserine decarboxylase proenzyme.